The following is a 350-amino-acid chain: S-adenosylmethionine:tRNA ribosyltransferase-isomerase (350 aa).

It belongs to the QueA family. As to quaternary structure, monomer.

Its subcellular location is the cytoplasm. It catalyses the reaction 7-aminomethyl-7-carbaguanosine(34) in tRNA + S-adenosyl-L-methionine = epoxyqueuosine(34) in tRNA + adenine + L-methionine + 2 H(+). The protein operates within tRNA modification; tRNA-queuosine biosynthesis. Its function is as follows. Transfers and isomerizes the ribose moiety from AdoMet to the 7-aminomethyl group of 7-deazaguanine (preQ1-tRNA) to give epoxyqueuosine (oQ-tRNA). This is S-adenosylmethionine:tRNA ribosyltransferase-isomerase from Parvibaculum lavamentivorans (strain DS-1 / DSM 13023 / NCIMB 13966).